The sequence spans 127 residues: Small ribosomal subunit protein uS12m (127 aa).

The protein belongs to the universal ribosomal protein uS12 family.

The protein resides in the mitochondrion. In terms of biological role, protein S12 is involved in the translation initiation step. The protein is Small ribosomal subunit protein uS12m (RPS12) of Chondrus crispus (Carrageen Irish moss).